Consider the following 290-residue polypeptide: Putative transport permease ycf38 (290 aa).

A run of 7 helical transmembrane segments spans residues 21–41, 46–66, 86–106, 133–153, 167–187, 194–213, and 261–281; these read VTSF…FIQL, ITLI…GALF, PGIL…PLIF, FFIS…GVFL, FFFL…LALL, LIAV…TALA, and INIG…FLLF. Residues 46–284 form the ABC transmembrane type-2 domain; it reads ITLISGILQP…LVGFLLFKKI (239 aa).

This sequence belongs to the ABC-2 integral membrane protein family.

The protein localises to the plastid. The protein resides in the cyanelle membrane. The chain is Putative transport permease ycf38 (ycf38) from Cyanophora paradoxa.